A 130-amino-acid polypeptide reads, in one-letter code: MSQVPEDLKYTRNHEWVRVEADGSVTVGITEHAQESLGDLVFVEPPEAGTQVQAEEACAVVESVKAASDVYAPISGEVTQGNEALADNPEAVNTDPYGDGWIMRIQPADTSEIDGLLDAAAYQELVADEG.

Residues 24 to 106 form the Lipoyl-binding domain; sequence SVTVGITEHA…YGDGWIMRIQ (83 aa). An N6-lipoyllysine modification is found at K65.

Belongs to the GcvH family. In terms of assembly, the glycine cleavage system is composed of four proteins: P, T, L and H. (R)-lipoate serves as cofactor.

The glycine cleavage system catalyzes the degradation of glycine. The H protein shuttles the methylamine group of glycine from the P protein to the T protein. The protein is Glycine cleavage system H protein of Halorhodospira halophila (strain DSM 244 / SL1) (Ectothiorhodospira halophila (strain DSM 244 / SL1)).